The primary structure comprises 167 residues: Photosystem I assembly protein Ycf3 (167 aa).

TPR repeat units follow at residues 35–68, 72–105, and 120–153; these read AFSYYRDGMSAQSEGEYAEALANYYEALNLEEDP, SFILYNIGLIHASNGEYVKALDYYHKALEANNKL, and AVKASEINDLETAQALFHEAAQYWKQAIKLAPSN.

The protein belongs to the Ycf3 family.

Its subcellular location is the plastid. The protein localises to the chloroplast thylakoid membrane. Functionally, essential for the assembly of the photosystem I (PSI) complex. May act as a chaperone-like factor to guide the assembly of the PSI subunits. The protein is Photosystem I assembly protein Ycf3 of Galdieria sulphuraria (Red alga).